Consider the following 89-residue polypeptide: uncharacterized protein (89 aa).

Helical transmembrane passes span Ile11–Leu31 and Ala63–Phe83.

The protein localises to the cell membrane. This is an uncharacterized protein from Methanocaldococcus jannaschii (strain ATCC 43067 / DSM 2661 / JAL-1 / JCM 10045 / NBRC 100440) (Methanococcus jannaschii).